We begin with the raw amino-acid sequence, 179 residues long: SCAN domain-containing protein 1 (179 aa).

Residues 1 to 108 are disordered; the sequence is MAATEPILAA…GSRLGPETFR (108 aa). Residues 60–80 show a composition bias toward low complexity; the sequence is AIPTPQAAASAAPELPLGPAP. One can recognise an SCAN box domain in the interval 108 to 166; that stretch reads RQRFRQFRYQDAAGPREAFRQLRELSRQWLRPDIRTKEQIVEMLVQEQLLAILPEAARA.

In terms of assembly, interacts with ZNF202.

It is found in the nucleus. In terms of biological role, may regulate transcriptional activity. The sequence is that of SCAN domain-containing protein 1 (SCAND1) from Pongo pygmaeus (Bornean orangutan).